A 123-amino-acid polypeptide reads, in one-letter code: Holo-[acyl-carrier-protein] synthase (123 aa).

Asp8 and Glu60 together coordinate Mg(2+).

This sequence belongs to the P-Pant transferase superfamily. AcpS family. It depends on Mg(2+) as a cofactor.

The protein resides in the cytoplasm. It catalyses the reaction apo-[ACP] + CoA = holo-[ACP] + adenosine 3',5'-bisphosphate + H(+). Transfers the 4'-phosphopantetheine moiety from coenzyme A to a Ser of acyl-carrier-protein. The polypeptide is Holo-[acyl-carrier-protein] synthase (Ehrlichia ruminantium (strain Welgevonden)).